Consider the following 306-residue polypeptide: Large ribosomal subunit protein uL2m (306 aa).

The N-terminal 60 residues, 1 to 60, are a transit peptide targeting the mitochondrion; it reads MALCALTSALRSLSLASAAITARVPTLLPAAQIQSNVLLQLPPALVSPSYRPVHMSADRS.

It belongs to the universal ribosomal protein uL2 family. Component of the mitochondrial ribosome large subunit (39S) which comprises a 16S rRNA and about 50 distinct proteins.

The protein localises to the mitochondrion. This is Large ribosomal subunit protein uL2m (Mrpl2) from Mus musculus (Mouse).